The chain runs to 288 residues: MKNVLSIQSHVVYGFAGNKSATFPMQLLGVDVWALNTVQFSNHTQYGKWTGMVIPQEQIREIVTGLDNIEKLQECDALLSGYLGSAEQVDQILFALEQIKLRNPNALYLCDPVMPHPKKICVVANGVREALIEKAIPVADIMTPNLHELRQLTEFPINTFDDVLKAVNALIAKGVKKVLVKHLGSAGKINDPDTFEIIMATPEGVWHLSRPLYQFNFEPVGVGDLIAGTFLANLLNGKSDVEAFEAMNNEVAGVMKTTFELGSYELQTIAARFEILNPSSNYKAEKVA.

Substrate contacts are provided by residues Ser9 and 44–45 (TQ). ATP contacts are provided by Asp111, Glu148, and Lys181. Asp224 is a binding site for substrate.

Belongs to the pyridoxine kinase family. PdxY subfamily. Homodimer. It depends on Mg(2+) as a cofactor.

The enzyme catalyses pyridoxal + ATP = pyridoxal 5'-phosphate + ADP + H(+). Its pathway is cofactor metabolism; pyridoxal 5'-phosphate salvage; pyridoxal 5'-phosphate from pyridoxal: step 1/1. Pyridoxal kinase involved in the salvage pathway of pyridoxal 5'-phosphate (PLP). Catalyzes the phosphorylation of pyridoxal to PLP. In Haemophilus influenzae (strain ATCC 51907 / DSM 11121 / KW20 / Rd), this protein is Pyridoxal kinase PdxY.